Consider the following 359-residue polypeptide: Probable dual-specificity RNA methyltransferase RlmN (359 aa).

E91 functions as the Proton acceptor in the catalytic mechanism. Positions 97–329 (QHYGHSVCVT…KKNGVNCVVR (233 aa)) constitute a Radical SAM core domain. A disulfide bridge links C104 with C340. C111, C115, and C118 together coordinate [4Fe-4S] cluster. S-adenosyl-L-methionine is bound by residues 163–164 (GE), S195, 218–220 (SLH), and N296. The active-site S-methylcysteine intermediate is the C340.

It belongs to the radical SAM superfamily. RlmN family. [4Fe-4S] cluster is required as a cofactor.

The protein resides in the cytoplasm. It carries out the reaction adenosine(2503) in 23S rRNA + 2 reduced [2Fe-2S]-[ferredoxin] + 2 S-adenosyl-L-methionine = 2-methyladenosine(2503) in 23S rRNA + 5'-deoxyadenosine + L-methionine + 2 oxidized [2Fe-2S]-[ferredoxin] + S-adenosyl-L-homocysteine. The enzyme catalyses adenosine(37) in tRNA + 2 reduced [2Fe-2S]-[ferredoxin] + 2 S-adenosyl-L-methionine = 2-methyladenosine(37) in tRNA + 5'-deoxyadenosine + L-methionine + 2 oxidized [2Fe-2S]-[ferredoxin] + S-adenosyl-L-homocysteine. In terms of biological role, specifically methylates position 2 of adenine 2503 in 23S rRNA and position 2 of adenine 37 in tRNAs. The chain is Probable dual-specificity RNA methyltransferase RlmN from Streptococcus pyogenes serotype M5 (strain Manfredo).